The chain runs to 158 residues: SsrA-binding protein (158 aa).

This sequence belongs to the SmpB family.

It localises to the cytoplasm. Functionally, required for rescue of stalled ribosomes mediated by trans-translation. Binds to transfer-messenger RNA (tmRNA), required for stable association of tmRNA with ribosomes. tmRNA and SmpB together mimic tRNA shape, replacing the anticodon stem-loop with SmpB. tmRNA is encoded by the ssrA gene; the 2 termini fold to resemble tRNA(Ala) and it encodes a 'tag peptide', a short internal open reading frame. During trans-translation Ala-aminoacylated tmRNA acts like a tRNA, entering the A-site of stalled ribosomes, displacing the stalled mRNA. The ribosome then switches to translate the ORF on the tmRNA; the nascent peptide is terminated with the 'tag peptide' encoded by the tmRNA and targeted for degradation. The ribosome is freed to recommence translation, which seems to be the essential function of trans-translation. The polypeptide is SsrA-binding protein (Bifidobacterium longum (strain DJO10A)).